Consider the following 160-residue polypeptide: 6,7-dimethyl-8-ribityllumazine synthase (160 aa).

5-amino-6-(D-ribitylamino)uracil is bound by residues Phe22, 57–59 (TYE), and 81–83 (TII). A (2S)-2-hydroxy-3-oxobutyl phosphate-binding site is contributed by 86 to 87 (QT). His89 serves as the catalytic Proton donor. Leu114 serves as a coordination point for 5-amino-6-(D-ribitylamino)uracil. Residue Arg128 coordinates (2S)-2-hydroxy-3-oxobutyl phosphate.

The protein belongs to the DMRL synthase family. In terms of assembly, forms an icosahedral capsid composed of 60 subunits, arranged as a dodecamer of pentamers.

The catalysed reaction is (2S)-2-hydroxy-3-oxobutyl phosphate + 5-amino-6-(D-ribitylamino)uracil = 6,7-dimethyl-8-(1-D-ribityl)lumazine + phosphate + 2 H2O + H(+). Its pathway is cofactor biosynthesis; riboflavin biosynthesis; riboflavin from 2-hydroxy-3-oxobutyl phosphate and 5-amino-6-(D-ribitylamino)uracil: step 1/2. Catalyzes the formation of 6,7-dimethyl-8-ribityllumazine by condensation of 5-amino-6-(D-ribitylamino)uracil with 3,4-dihydroxy-2-butanone 4-phosphate. This is the penultimate step in the biosynthesis of riboflavin. In Buchnera aphidicola subsp. Acyrthosiphon pisum (strain Tuc7), this protein is 6,7-dimethyl-8-ribityllumazine synthase.